Consider the following 1487-residue polypeptide: Golgin subfamily A member 3 (1487 aa).

M1 is modified (N-acetylmethionine). Residues 1–118 (MDGASAKQDG…GTSAEGSVRK (118 aa)) form a disordered region. Residues S18 and S60 each carry the phosphoserine modification. Over residues 62–74 (DRSSQVAICQNGQ) the composition is skewed to polar residues. The interval 121–141 (LQSLRLSLPMQETQLCSTASS) is interaction with GOPC. Residues 172–257 (ERSSQPATKM…DYRTEDPSDS (86 aa)) are golgi-targeting domain. 2 disordered regions span residues 221–321 (PKVG…SSLS) and 365–394 (AAQH…SMES). Low complexity-rich tracts occupy residues 269 to 288 (SSLK…SPSS), 312 to 321 (SDSSSHSSLS), and 365 to 375 (AAQHQDQNQEA). At S270 the chain carries Phosphoserine. A coiled-coil region spans residues 358–1454 (KDVLQAAAAQ…TITVHESLSS (1097 aa)). Phosphoserine occurs at positions 381, 385, and 461. The segment covering 785-796 (KEELDRGARRLE) has biased composition (basic and acidic residues). Positions 785 to 804 (KEELDRGARRLEEDTEETSG) are disordered. Position 979 is a phosphoserine (S979). The span at 1372 to 1382 (RGAAKKKEPKG) shows a compositional bias: basic and acidic residues. Disordered regions lie at residues 1372-1396 (RGAA…IKIP) and 1458-1487 (VEAA…GLGQ). S1387 bears the Phosphoserine mark. Positions 1462–1474 (PAEHAHPRGDTKL) are enriched in basic and acidic residues. Phosphoserine is present on S1479.

Homodimer. Interacts with GOLGA7. Interacts with GOPC. Post-translationally, cleaved by caspases in apoptotic cells. In terms of tissue distribution, highly expressed in testis. Transcripts can be found in spermatids during spermatogenesis. No expression in Leydig cells, spermatogonia or spermatocytes. Detected at low levels in all tissues.

The protein localises to the cytoplasm. Its subcellular location is the golgi apparatus. It is found in the golgi stack membrane. Plays an important role in spermatogenesis and/or testis development. Probably identical with the serologically detectable male antigen (SDM). Probably involved in maintaining Golgi structure. The polypeptide is Golgin subfamily A member 3 (Golga3) (Mus musculus (Mouse)).